The sequence spans 104 residues: Thioredoxin (104 aa).

Residues 2–104 (AIVKVTDADF…NLAEVLDKHL (103 aa)) enclose the Thioredoxin domain. A disulfide bridge links Cys-29 with Cys-32.

Belongs to the thioredoxin family.

Functionally, component of the thioredoxin-thioredoxin reductase system. Participates in various redox reactions through the reversible oxidation of its active center dithiol to a disulfide and catalyzes dithiol-disulfide exchange reactions. The sequence is that of Thioredoxin (trxA) from Staphylococcus aureus (strain N315).